The following is a 239-amino-acid chain: Caffeoyl-CoA O-methyltransferase 1 (239 aa).

K13 provides a ligand contact to substrate. Residues T55, E77, 79 to 80 (GV), S85, D103, and A132 each bind S-adenosyl-L-methionine. D155 lines the substrate pocket. D155 provides a ligand contact to a divalent metal cation. D157 lines the S-adenosyl-L-methionine pocket. A divalent metal cation is bound by residues D181 and N182. Residue N186 participates in substrate binding.

This sequence belongs to the class I-like SAM-binding methyltransferase superfamily. Cation-dependent O-methyltransferase family. CCoAMT subfamily. In terms of assembly, monomer. Mg(2+) is required as a cofactor. As to expression, mostly expressed in the bottom and middle parts of the stems.

The enzyme catalyses (E)-caffeoyl-CoA + S-adenosyl-L-methionine = (E)-feruloyl-CoA + S-adenosyl-L-homocysteine + H(+). Its pathway is aromatic compound metabolism; phenylpropanoid biosynthesis. Functionally, methylates caffeoyl-CoA to feruloyl-CoA and 5-hydroxyferuloyl-CoA to sinapoyl-CoA. Plays a role in the synthesis of feruloylated polysaccharides. Involved in the reinforcement of the plant cell wall. Also involved in the responding to wounding or pathogen challenge by the increased formation of cell wall-bound ferulic acid polymers. The polypeptide is Caffeoyl-CoA O-methyltransferase 1 (CCOAOMT1) (Nicotiana tabacum (Common tobacco)).